Reading from the N-terminus, the 400-residue chain is Peroxisome biogenesis factor 16 (400 aa).

The interval 176 to 226 (QKQFQNKRPAVTMSINNNNNINNNDNNNINNNNNTNDDNFNNNNNNNNNRR) is disordered. Positions 190–224 (INNNNNINNNDNNNINNNNNTNDDNFNNNNNNNNN) are enriched in low complexity.

This sequence belongs to the peroxin-16 family.

It is found in the cytoplasm. In terms of biological role, required for peroxisome membrane biogenesis. In Dictyostelium discoideum (Social amoeba), this protein is Peroxisome biogenesis factor 16 (pex16).